The chain runs to 497 residues: Proline--tRNA ligase (497 aa).

This sequence belongs to the class-II aminoacyl-tRNA synthetase family. ProS type 3 subfamily. Homodimer.

Its subcellular location is the cytoplasm. The enzyme catalyses tRNA(Pro) + L-proline + ATP = L-prolyl-tRNA(Pro) + AMP + diphosphate. Its function is as follows. Catalyzes the attachment of proline to tRNA(Pro) in a two-step reaction: proline is first activated by ATP to form Pro-AMP and then transferred to the acceptor end of tRNA(Pro). This Deinococcus geothermalis (strain DSM 11300 / CIP 105573 / AG-3a) protein is Proline--tRNA ligase.